The following is a 382-amino-acid chain: Alkanesulfonate monooxygenase (382 aa).

Belongs to the SsuD family.

The enzyme catalyses an alkanesulfonate + FMNH2 + O2 = an aldehyde + FMN + sulfite + H2O + 2 H(+). Functionally, catalyzes the desulfonation of aliphatic sulfonates. In Ectopseudomonas mendocina (strain ymp) (Pseudomonas mendocina), this protein is Alkanesulfonate monooxygenase.